We begin with the raw amino-acid sequence, 175 residues long: MASLRVERAGGPRLPRTRVGRPAALRLLLLLGAVLNPHEALAQPLPTTGTPGSEGGTVKNYETAVQFCWNHYKDQMDPIEKDWCDWAMISRPYSTLRDCLEHFAELFDLGFPNPLAERIIFETHQIHFANCSLVQPTFSDPPEDVLLAMIIAPICLIPFLITLVVWRSKDSEAQA.

The N-terminal stretch at 1 to 42 is a signal peptide; that stretch reads MASLRVERAGGPRLPRTRVGRPAALRLLLLLGAVLNPHEALA. Residues 43–143 lie on the Extracellular side of the membrane; the sequence is QPLPTTGTPG…VQPTFSDPPE (101 aa). 2 disulfide bridges follow: Cys-68-Cys-99 and Cys-84-Cys-131. Asn-130 carries an N-linked (GlcNAc...) asparagine glycan. Residues 144–165 form a helical membrane-spanning segment; that stretch reads DVLLAMIIAPICLIPFLITLVV. The Cytoplasmic portion of the chain corresponds to 166-175; the sequence is WRSKDSEAQA.

The protein belongs to the RAMP family. As to quaternary structure, heterodimer of CALCRL and RAMP2; the interaction forms the receptor complex for adrenomedullin/ADM. Heterodimer of CALCR and RAMP2; interaction forms the AMYR2 receptor complex for calcitonin/CALC and amylin/IAPP. In terms of tissue distribution, strongly expressed in lung, breast, immune system and fetal tissues.

The protein resides in the cell membrane. Accessory protein that interacts with and modulates the function of G-protein coupled receptors including calcitonin gene-related peptide type 1 receptor (CALCRL) and calcitonin receptor (CALCR). Required for the transport of CALCRL to the plasma membrane. Together with CALCRL, form a receptor complex for adrenomedullin/ADM. Together with CALCR, act as a receptor complex for calcitonin/CT/CALC. Together with CALCR, also act as a receptor complex for amylin/IAPP. The chain is Receptor activity-modifying protein 2 from Homo sapiens (Human).